Consider the following 331-residue polypeptide: Vitamin B12 import system permease protein BtuC (331 aa).

9 consecutive transmembrane segments (helical) span residues 20–42 (LLIG…WLSP), 62–84 (LLAA…VLLG), 91–113 (GVVG…FPSL), 117–136 (VAFM…LLVV), 148–170 (LLLV…FYFS), 190–209 (SWYQ…WLVL), 240–262 (LAIA…VGLV), 277–299 (LLLP…IARL), and 306–325 (LPLG…WMLV).

Belongs to the binding-protein-dependent transport system permease family. FecCD subfamily. As to quaternary structure, the complex is composed of two ATP-binding proteins (BtuD), two transmembrane proteins (BtuC) and a solute-binding protein (BtuF).

It localises to the cell inner membrane. In terms of biological role, part of the ABC transporter complex BtuCDF involved in vitamin B12 import. Involved in the translocation of the substrate across the membrane. The chain is Vitamin B12 import system permease protein BtuC from Vibrio cholerae serotype O1 (strain ATCC 39315 / El Tor Inaba N16961).